The chain runs to 435 residues: Serine--tRNA ligase (435 aa).

Residues 41–70 (QVKTEELQAQRNSRSKSIGQAKAKGDHEEA) form a disordered region. Residues 49–58 (AQRNSRSKSI) are compositionally biased toward polar residues. 242-244 (TAE) lines the L-serine pocket. 273 to 275 (RSE) serves as a coordination point for ATP. Position 296 (Glu296) interacts with L-serine. Position 360 to 363 (360 to 363 (EISS)) interacts with ATP. Ser396 is a binding site for L-serine.

It belongs to the class-II aminoacyl-tRNA synthetase family. Type-1 seryl-tRNA synthetase subfamily. Homodimer. The tRNA molecule binds across the dimer.

Its subcellular location is the cytoplasm. The enzyme catalyses tRNA(Ser) + L-serine + ATP = L-seryl-tRNA(Ser) + AMP + diphosphate + H(+). It carries out the reaction tRNA(Sec) + L-serine + ATP = L-seryl-tRNA(Sec) + AMP + diphosphate + H(+). Its pathway is aminoacyl-tRNA biosynthesis; selenocysteinyl-tRNA(Sec) biosynthesis; L-seryl-tRNA(Sec) from L-serine and tRNA(Sec): step 1/1. Functionally, catalyzes the attachment of serine to tRNA(Ser). Is also able to aminoacylate tRNA(Sec) with serine, to form the misacylated tRNA L-seryl-tRNA(Sec), which will be further converted into selenocysteinyl-tRNA(Sec). The polypeptide is Serine--tRNA ligase (Aliivibrio fischeri (strain MJ11) (Vibrio fischeri)).